The primary structure comprises 143 residues: Succinate dehydrogenase assembly factor 2, mitochondrial (143 aa).

This sequence belongs to the SDHAF2 family. In terms of assembly, interacts with the flavoprotein subunit within the SDH catalytic dimer.

It localises to the mitochondrion matrix. Functionally, plays an essential role in the assembly of succinate dehydrogenase (SDH), an enzyme complex (also referred to as respiratory complex II) that is a component of both the tricarboxylic acid (TCA) cycle and the mitochondrial electron transport chain, and which couples the oxidation of succinate to fumarate with the reduction of ubiquinone (coenzyme Q) to ubiquinol. Required for flavinylation (covalent attachment of FAD) of the flavoprotein subunit of the SDH catalytic dimer. The chain is Succinate dehydrogenase assembly factor 2, mitochondrial from Schizosaccharomyces japonicus (strain yFS275 / FY16936) (Fission yeast).